The primary structure comprises 170 residues: Probable chemoreceptor glutamine deamidase CheD (170 aa).

Belongs to the CheD family.

It catalyses the reaction L-glutaminyl-[protein] + H2O = L-glutamyl-[protein] + NH4(+). Functionally, probably deamidates glutamine residues to glutamate on methyl-accepting chemotaxis receptors (MCPs), playing an important role in chemotaxis. The polypeptide is Probable chemoreceptor glutamine deamidase CheD (Maridesulfovibrio salexigens (strain ATCC 14822 / DSM 2638 / NCIMB 8403 / VKM B-1763) (Desulfovibrio salexigens)).